A 258-amino-acid polypeptide reads, in one-letter code: Phosphate import ATP-binding protein PstB (258 aa).

The region spanning 5–253 (LDLNDVNIYY…PTKKETEDYI (249 aa)) is the ABC transporter domain. ATP is bound at residue 37–44 (GPSGCGKS).

This sequence belongs to the ABC transporter superfamily. Phosphate importer (TC 3.A.1.7) family. In terms of assembly, the complex is composed of two ATP-binding proteins (PstB), two transmembrane proteins (PstC and PstA) and a solute-binding protein (PstS).

It is found in the cell membrane. The catalysed reaction is phosphate(out) + ATP + H2O = ADP + 2 phosphate(in) + H(+). Its function is as follows. Part of the ABC transporter complex PstSACB involved in phosphate import. Responsible for energy coupling to the transport system. This is Phosphate import ATP-binding protein PstB from Corynebacterium jeikeium (strain K411).